A 414-amino-acid chain; its full sequence is Protein IQ-DOMAIN 8 (414 aa).

A Nuclear localization signal 1 motif is present at residues 14–21; that stretch reads NKKNITDD. The interval 40–61 is disordered; it reads LISSSKGFKSRGGSYGTPSLGS. IQ domains are found at residues 92–120, 121–143, and 144–169; these read REWAATRIQAAFRAFLARQALRALKAVVR, IQAIFRGRQVRKQADVTLRCMQA, and LVRVQARVRAHCNRGPSDGQELEKPS. A calmodulin-binding region spans residues 119–132; that stretch reads VRIQAIFRGRQVRK. 3 disordered regions span residues 156-190, 218-244, and 262-329; these read NRGPSDGQELEKPSDQQKDDPAKQAEKGWCDSPGS, HQPRTCPSPAKASKQGSVKKNNGSCKS, and GRLM…SGSF. Residues 164 to 184 are compositionally biased toward basic and acidic residues; that stretch reads ELEKPSDQQKDDPAKQAEKGW. The segment covering 231-244 has biased composition (polar residues); it reads KQGSVKKNNGSCKS. A compositionally biased stretch (basic and acidic residues) spans 274 to 289; that stretch reads NARKSESSVSEHDTVQ. Over residues 307 to 328 the composition is skewed to low complexity; the sequence is SSSATSSESSSTSQSPVPFSGS. Residues 336 to 343 carry the Nuclear localization signal 2 motif; the sequence is YRKPSYMS. The disordered stretch occupies residues 347 to 398; sequence SIKAKQRRSGSSSSCSKTPFEKKQSMSYNGDVNVRRSAGSDPLNNQWTDLYP.

It belongs to the IQD family. In terms of assembly, binds to multiple calmodulin (CaM) in the presence of Ca(2+) and CaM-like proteins.

Its subcellular location is the nucleus. The protein localises to the cytoplasm. It is found in the cytoskeleton. The protein resides in the nucleus envelope. In terms of biological role, may be involved in cooperative interactions with calmodulins or calmodulin-like proteins. Recruits calmodulin proteins to microtubules, thus being a potential scaffold in cellular signaling and trafficking. May associate with nucleic acids and regulate gene expression at the transcriptional or post-transcriptional level. In Arabidopsis thaliana (Mouse-ear cress), this protein is Protein IQ-DOMAIN 8.